Reading from the N-terminus, the 222-residue chain is Germin-like protein subfamily 1 member 14 (222 aa).

The N-terminal stretch at 1–22 (MRFSKSLILITLSALVISFAEA) is a signal peptide. Cysteine 32 and cysteine 49 are oxidised to a cystine. The 152-residue stretch at 63–214 (SGLNQAGTTN…AFQLDVNVVK (152 aa)) folds into the Cupin type-1 domain. Asparagine 78 carries an N-linked (GlcNAc...) asparagine glycan. Mn(2+) is bound by residues histidine 111, histidine 113, glutamate 118, and histidine 160.

This sequence belongs to the germin family. In terms of assembly, oligomer (believed to be a pentamer but probably hexamer).

The protein localises to the secreted. It localises to the extracellular space. The protein resides in the apoplast. Its function is as follows. May play a role in plant defense. Probably has no oxalate oxidase activity even if the active site is conserved. The chain is Germin-like protein subfamily 1 member 14 from Arabidopsis thaliana (Mouse-ear cress).